The sequence spans 476 residues: Calcium/calmodulin-dependent protein kinase type 1G (476 aa).

A Protein kinase domain is found at 23–277 (FIFMEVLGSG…CEKALRHPWI (255 aa)). ATP-binding positions include 29-37 (LGSGAFSEV) and Lys52. Asp143 (proton acceptor) is an active-site residue. The tract at residues 277 to 317 (IDGNTALHRDIYPSVSLQIQKNFAKSKWRQAFNAAAVVHHM) is autoinhibitory domain. A calmodulin-binding region spans residues 297-318 (KNFAKSKWRQAFNAAAVVHHMR). The tract at residues 326–387 (SPSVRQEVEN…SSRPSAPGGR (62 aa)) is disordered.

It belongs to the protein kinase superfamily. CAMK Ser/Thr protein kinase family. CaMK subfamily. In terms of processing, prenylated on Cys-473.

Its subcellular location is the cytoplasm. It is found in the golgi apparatus membrane. The protein localises to the cell membrane. It catalyses the reaction L-seryl-[protein] + ATP = O-phospho-L-seryl-[protein] + ADP + H(+). The enzyme catalyses L-threonyl-[protein] + ATP = O-phospho-L-threonyl-[protein] + ADP + H(+). Activated by Ca(2+)/calmodulin. Binding of calmodulin is thought to result in a conformational change and leads to activation through phosphorylation by CAMKK1. Its function is as follows. Calcium/calmodulin-dependent protein kinase belonging to a proposed calcium-triggered signaling cascade. In vitro phosphorylates transcription factor CREB1. This is Calcium/calmodulin-dependent protein kinase type 1G (Camk1g) from Rattus norvegicus (Rat).